Reading from the N-terminus, the 157-residue chain is ATP synthase subunit b (157 aa).

The helical transmembrane segment at 1–21 (MHFLDESFWLAISFIIFVYLI) threads the bilayer.

This sequence belongs to the ATPase B chain family. F-type ATPases have 2 components, F(1) - the catalytic core - and F(0) - the membrane proton channel. F(1) has five subunits: alpha(3), beta(3), gamma(1), delta(1), epsilon(1). F(0) has three main subunits: a(1), b(2) and c(10-14). The alpha and beta chains form an alternating ring which encloses part of the gamma chain. F(1) is attached to F(0) by a central stalk formed by the gamma and epsilon chains, while a peripheral stalk is formed by the delta and b chains.

It localises to the cell inner membrane. Functionally, f(1)F(0) ATP synthase produces ATP from ADP in the presence of a proton or sodium gradient. F-type ATPases consist of two structural domains, F(1) containing the extramembraneous catalytic core and F(0) containing the membrane proton channel, linked together by a central stalk and a peripheral stalk. During catalysis, ATP synthesis in the catalytic domain of F(1) is coupled via a rotary mechanism of the central stalk subunits to proton translocation. Component of the F(0) channel, it forms part of the peripheral stalk, linking F(1) to F(0). The polypeptide is ATP synthase subunit b (Rickettsia bellii (strain RML369-C)).